Consider the following 502-residue polypeptide: ATP synthase subunit alpha (502 aa).

Glycine 169 to threonine 176 provides a ligand contact to ATP.

This sequence belongs to the ATPase alpha/beta chains family. As to quaternary structure, F-type ATPases have 2 components, CF(1) - the catalytic core - and CF(0) - the membrane proton channel. CF(1) has five subunits: alpha(3), beta(3), gamma(1), delta(1), epsilon(1). CF(0) has three main subunits: a(1), b(2) and c(9-12). The alpha and beta chains form an alternating ring which encloses part of the gamma chain. CF(1) is attached to CF(0) by a central stalk formed by the gamma and epsilon chains, while a peripheral stalk is formed by the delta and b chains.

It localises to the cell membrane. It catalyses the reaction ATP + H2O + 4 H(+)(in) = ADP + phosphate + 5 H(+)(out). Produces ATP from ADP in the presence of a proton gradient across the membrane. The alpha chain is a regulatory subunit. The sequence is that of ATP synthase subunit alpha from Clostridium perfringens (strain ATCC 13124 / DSM 756 / JCM 1290 / NCIMB 6125 / NCTC 8237 / Type A).